Reading from the N-terminus, the 514-residue chain is Maturase K (514 aa).

It belongs to the intron maturase 2 family. MatK subfamily.

Its subcellular location is the plastid. It localises to the chloroplast. Its function is as follows. Usually encoded in the trnK tRNA gene intron. Probably assists in splicing its own and other chloroplast group II introns. This chain is Maturase K, found in Zamia integrifolia (Coontie).